The chain runs to 278 residues: S-formylglutathione hydrolase YeiG (278 aa).

Active-site charge relay system residues include Ser145, Asp223, and His256.

This sequence belongs to the esterase D family.

The catalysed reaction is S-formylglutathione + H2O = formate + glutathione + H(+). Serine hydrolase involved in the detoxification of formaldehyde. Hydrolyzes S-formylglutathione to glutathione and formate. The protein is S-formylglutathione hydrolase YeiG (yeiG) of Escherichia coli O139:H28 (strain E24377A / ETEC).